Here is a 110-residue protein sequence, read N- to C-terminus: Small ribosomal subunit protein uS17 (110 aa).

This sequence belongs to the universal ribosomal protein uS17 family. Part of the 30S ribosomal subunit.

One of the primary rRNA binding proteins, it binds specifically to the 5'-end of 16S ribosomal RNA. In Haloquadratum walsbyi (strain DSM 16790 / HBSQ001), this protein is Small ribosomal subunit protein uS17.